A 363-amino-acid polypeptide reads, in one-letter code: Type-2 angiotensin II receptor (363 aa).

Topologically, residues 1–45 (MKGNSTLATTSKNITSGLHFGLVNISGNNESTLNCSQKPSDKHLD) are extracellular. N-linked (GlcNAc...) asparagine glycosylation is found at N4, N13, N24, N29, and N34. Cystine bridges form between C35–C290 and C117–C195. A helical membrane pass occupies residues 46-70 (AIPILYYIIFVIGFLVNIVVVTLFC). Residues 71–80 (CQKGPKKVSS) lie on the Cytoplasmic side of the membrane. The helical transmembrane segment at 81–104 (IYIFNLAVADLLLLATLPLWATYY) threads the bilayer. Angiotensin II-binding residues include Y103 and Y104. Residues 105–114 (SYRYDWLFGP) are Extracellular-facing. Residues 115–140 (VMCKVFGSFLTLNMFASIFFITCMSV) form a helical membrane-spanning segment. Topologically, residues 141 to 159 (DRYQSVIYPFLSQRRNPWQ) are cytoplasmic. Residues 160–181 (ASYIVPLVWCMACLSSLPTFYF) traverse the membrane as a helical segment. Positions 182, 204, and 215 each coordinate angiotensin II. Over 182-206 (RDVRTIEYLGVNACIMAFPPEKYAQ) the chain is Extracellular. The chain crosses the membrane as a helical span at residues 207–232 (WSAGIALMKNILGFIIPLIFIATCYF). Residues 233–257 (GIRKHLLKTNSYGKNRITRDQVLKM) are Cytoplasmic-facing. The helical transmembrane segment at 258–281 (AAAVVLAFIICWLPFHVLTFLDAL) threads the bilayer. Residue D279 coordinates angiotensin II. At 282–294 (AWMGVINSCEVIA) the chain is on the extracellular side. The chain crosses the membrane as a helical span at residues 295–320 (VIDLALPFAILLGFTNSCVNPFLYCF). D297 serves as a coordination point for angiotensin II. At 321 to 363 (VGNRFQQKLRSVFRVPITWLQGKRESMSCRKSSSLREMETFVS) the chain is on the cytoplasmic side. The segment at 324 to 333 (RFQQKLRSVF) is helix VIII.

It belongs to the G-protein coupled receptor 1 family. Interacts with MTUS1. In terms of tissue distribution, in adult, highly expressed in myometrium with lower levels in adrenal gland and fallopian tube. Expressed in the cerebellum. Very highly expressed in fetal kidney and intestine.

The protein resides in the cell membrane. Receptor for angiotensin II, a vasoconstricting peptide. Signals primarily via a non-canonical G-protein- and beta-arrestin independent pathways. Cooperates with MTUS1 to inhibit ERK2 activation and cell proliferation. The polypeptide is Type-2 angiotensin II receptor (Homo sapiens (Human)).